We begin with the raw amino-acid sequence, 176 residues long: Telomerase RNA component interacting RNase (176 aa).

A compositionally biased stretch (basic and acidic residues) spans 1–12 (MAARGRRAEPQG). The disordered stretch occupies residues 1–121 (MAARGRRAEP…TLSFVGKRRG (121 aa)). Positions 45–56 (SGAGSSPVSGGV) are enriched in low complexity. Over residues 68–83 (LFKRKMEEEQRQRQEE) the composition is skewed to basic and acidic residues. The segment covering 90-101 (RPDQSAAAAGPG) has biased composition (low complexity). An N6-acetyllysine modification is found at Lys-146.

As to quaternary structure, part of the telomerase RNA 3' end complex which contains about 488 proteins.

With respect to regulation, zn(2+) inhibits the RNase activity while Mg(2+), Ca(2+), Mn(2+), K(+), Na(+), EDTA and EGTA show little effect on the exoribonuclease activity. Functionally, exoribonuclease that is part of the telomerase RNA 3' end processing complex and which has the ability to cleave all four unpaired RNA nucleotides from the 5' end or 3' end with higher efficiency for purine bases. This is Telomerase RNA component interacting RNase from Homo sapiens (Human).